Consider the following 78-residue polypeptide: uncharacterized protein (78 aa).

A run of 2 helical transmembrane segments spans residues 13-35 (AGVG…PTGI) and 50-72 (GTTF…FYYF).

It is found in the cell membrane. This is an uncharacterized protein from Pasteurella multocida (strain Pm70).